The chain runs to 446 residues: Cytochrome P450 monooxygenase ATR14 (446 aa).

Residues 403-446 are disordered; sequence NFTYPDEFRPDRWLDDRDQKEYEHDHGDAMQPFSVGPRDCPSQK. Over residues 408–430 the composition is skewed to basic and acidic residues; it reads DEFRPDRWLDDRDQKEYEHDHGD. Cysteine 442 contributes to the heme binding site.

This sequence belongs to the cytochrome P450 family. Heme serves as cofactor.

Its pathway is mycotoxin biosynthesis. Its function is as follows. Cytochrome P450 monooxygenase; part of the core atranone cluster (CAC) which products are predicted to catalyze most or all steps of mycotoxin atranone synthesis, starting from geranylgeranyl pyrophosphate (GGPP). The initial cyclization of GGPP to dolabellane is probably performed by the terpene cyclase ATR13. The Baeyer-Villiger oxidation near the end of the atranone synthesis, which converts atranones D and E to atranones F and G is predicted to be catalyzed by the monooxygenase ATR8. Of the CAC's other predicted gene products, the reducing PKS ATR6 might synthesize a polyketide chain. This polyketide is probably transferred onto the atranone backbone by the polyketide transferase ATR5. Other predicted CAC products include 4 oxygenases (ATR2, ATR3, ATR4, and ATR14), 3 short-chain reductases (ATR7, ATR9, and ATR10), and a methyltransferase (ATR12). These may all be involved in the various steps of atranone biosynthesis, although their specific roles must await experimental determination. The sequence is that of Cytochrome P450 monooxygenase ATR14 from Stachybotrys chlorohalonatus (strain IBT 40285).